The chain runs to 1347 residues: Agglutinin-like protein 5 (1347 aa).

Positions 1-19 are cleaved as a signal peptide; the sequence is MIQQFTLLFLYLSFATAKA. Intrachain disulfides connect cysteine 73–cysteine 150, cysteine 96–cysteine 112, cysteine 205–cysteine 298, and cysteine 227–cysteine 256. ALS repeat units lie at residues 365 to 396, 401 to 432, 438 to 469, 474 to 505, 510 to 541, and 546 to 577; these read TTIT…VDVP, TTVT…VQVP, TTTT…VREP, VTTT…VREP, VTTT…IKEP, and VTTT…IHDP. Disordered regions lie at residues 580 to 678, 704 to 725, and 789 to 813; these read ESSS…WDSS, VSNS…SNTS, and SDPT…FSDE. N-linked (GlcNAc...) asparagine glycans are attached at residues asparagine 593 and asparagine 723. N-linked (GlcNAc...) asparagine glycosylation occurs at asparagine 847. Disordered regions lie at residues 855–896, 909–964, 977–1021, 1062–1111, and 1139–1180; these read ESES…STVT, TGMP…KSSV, SETS…KESS, EDNE…VSSL, and ATSL…NRLS. 3 stretches are compositionally biased toward low complexity: residues 856–870, 879–896, and 921–939; these read SESS…ASES, SEST…STVT, and TSDV…PTSA. Residues 940–950 show a composition bias toward polar residues; that stretch reads EQSITDNPNID. Low complexity-rich tracts occupy residues 951–964 and 977–1002; these read SSQT…KSSV and SETS…NSDT. Composition is skewed to polar residues over residues 1003–1021 and 1066–1088; these read GNIN…KESS and PNTF…SVLS. Low complexity-rich tracts occupy residues 1097–1111 and 1140–1158; these read IKTS…VSSL and TSLR…SSGT. 2 N-linked (GlcNAc...) asparagine glycosylation sites follow: asparagine 1229 and asparagine 1254. The GPI-anchor amidated serine moiety is linked to residue serine 1326. The propeptide at 1327–1347 is removed in mature form; sequence SATKHPSWLLKFISVALFFFL.

This sequence belongs to the ALS family. As to quaternary structure, forms homodimers through the tandem repeats. Aggregates in amyloid-like structures, with self-propagating secondary-structure changes, amyloid-characteristic dye binding, and induced birefringence. Post-translationally, the GPI-anchor is attached to the protein in the endoplasmic reticulum and serves to target the protein to the cell surface. There, the glucosamine-inositol phospholipid moiety is cleaved off and the GPI-modified mannoprotein is covalently attached via its lipidless GPI glycan remnant to the 1,6-beta-glucan of the outer cell wall layer.

Its subcellular location is the cell membrane. It localises to the secreted. The protein localises to the cell wall. Its function is as follows. Cell surface adhesion protein which mediates both yeast-to-host tissue adherence and yeast aggregation. Plays an important role in the pathogenesis of C.albicans infections. Forms amyloid structures, essential for cell-cell association and cell-substrate adhesion to polystyrene. The protein is Agglutinin-like protein 5 (ALS5) of Candida albicans (strain SC5314 / ATCC MYA-2876) (Yeast).